A 347-amino-acid polypeptide reads, in one-letter code: MDKTKALDAALSQIERSFGKGSIMRLGQKEQVVEIETVPTGSLSLDIALGIGGLPKGRIVEIYGPESSGKTTLALHAIAEAQKGGGICAFIDAEHALDPIYARKLGVDLENLFISQPDTGEQALEITETLVRSGAVDVLVVDSVAALTPRAEIDGEMGDALPGLQARLMSKALRKLTASIFRSNCMVIFINQIRMKIGVMFGSPETTTGGNALKFYASVRLDIRRIGSIKDRDMIVGNQTRVKVVKNKLAPPFKQVEFDIIYGEGISKLGELIDLGVKVGIVEKSGSWFSYNSQRLGQGRENAKQFLREHAEIAAEIETALRQNAGLIAIELLENAGSENTEGDEVI.

ATP is bound at residue 64–71; sequence GPESSGKT.

This sequence belongs to the RecA family.

The protein localises to the cytoplasm. Can catalyze the hydrolysis of ATP in the presence of single-stranded DNA, the ATP-dependent uptake of single-stranded DNA by duplex DNA, and the ATP-dependent hybridization of homologous single-stranded DNAs. It interacts with LexA causing its activation and leading to its autocatalytic cleavage. The polypeptide is Protein RecA (Bartonella tribocorum (strain CIP 105476 / IBS 506)).